A 137-amino-acid polypeptide reads, in one-letter code: MKLNLYVLTPKRIIWDCEVKEIILSTNSGQIGVLPNHAPINTAVDMGPLRIRLLNDQWLTAVLWSGFARIVNNEIIILGNDAELGSDIDPEEAQQALEIAEANVSRAEGTKELVEAKVALRRARIRVEAVNWIPPSN.

It belongs to the ATPase epsilon chain family. In terms of assembly, F-type ATPases have 2 components, CF(1) - the catalytic core - and CF(0) - the membrane proton channel. CF(1) has five subunits: alpha(3), beta(3), gamma(1), delta(1), epsilon(1). CF(0) has three main subunits: a, b and c.

It localises to the plastid. It is found in the chloroplast thylakoid membrane. Functionally, produces ATP from ADP in the presence of a proton gradient across the membrane. The polypeptide is ATP synthase epsilon chain, chloroplastic (Oryza nivara (Indian wild rice)).